Consider the following 82-residue polypeptide: Sulfur carrier protein TusA (82 aa).

Cys19 functions as the Cysteine persulfide intermediate in the catalytic mechanism.

It belongs to the sulfur carrier protein TusA family.

The protein localises to the cytoplasm. Sulfur carrier protein which probably makes part of a sulfur-relay system. The protein is Sulfur carrier protein TusA of Photobacterium profundum (strain SS9).